The following is a 402-amino-acid chain: GPI mannosyltransferase 1 (402 aa).

10 consecutive transmembrane segments (helical) span residues V5–F25, W79–I99, L108–S128, L162–L182, I191–F211, F238–I258, L260–W280, Q309–W329, V333–L353, and L365–T385.

This sequence belongs to the PIGM family.

It localises to the endoplasmic reticulum membrane. Its pathway is glycolipid biosynthesis; glycosylphosphatidylinositol-anchor biosynthesis. Mannosyltransferase involved in glycosylphosphatidylinositol-anchor biosynthesis. Transfers the first alpha-1,4-mannose to GlcN-acyl-PI during GPI precursor assembly. Required for cell wall integrity. This chain is GPI mannosyltransferase 1 (GPI14), found in Kluyveromyces lactis (strain ATCC 8585 / CBS 2359 / DSM 70799 / NBRC 1267 / NRRL Y-1140 / WM37) (Yeast).